The primary structure comprises 1015 residues: Collagen alpha-2(I) chain (1015 aa).

A disordered region spans residues 1 to 1015 (SGGFDFSFLP…FGYEGDFYRA (1015 aa)). A 4-hydroxyproline mark is found at proline 10 and proline 13. The segment covering 20 to 30 (KGVGLGPGPMG) has biased composition (gly residues). The residue at position 38 (proline 38) is a 4-hydroxyproline. Residues 43-69 (QGPAGEPGEPGQTGPAGARGPAGPPGK) show a composition bias toward low complexity. Positions 70–84 (AGEDGHPGKPGRPGE) are enriched in basic and acidic residues. Lysine 106 carries the post-translational modification 5-hydroxylysine; alternate. O-linked (Gal...) hydroxylysine; alternate glycosylation occurs at lysine 106. Low complexity-rich tracts occupy residues 140 to 169 (VGAPGPAGARGSDGSVGPVGPAGPIGSAGP), 194 to 208 (AGPRGEQGLPGVSGP), and 235 to 250 (PGPVGAVGATGARGLV). Gly residues predominate over residues 302–311 (GLRGGPGSRG). Positions 324-340 (PAGSRGASGPAGVRGPS) are enriched in low complexity. 4-hydroxyproline occurs at positions 346 and 349. Gly residues predominate over residues 441–450 (GVQGGKGEQG). The segment covering 497 to 514 (PGESGAAGPVGPIGSRGP) has biased composition (low complexity). Gly residues predominate over residues 534 to 545 (GTAGPGSGGLPG). Composition is skewed to low complexity over residues 568 to 612 (VGTT…PRGS) and 619 to 639 (VGPAGPNGFAGPAGAAGQPGA). Basic and acidic residues predominate over residues 640–649 (KGERGTKGPK). A compositionally biased stretch (low complexity) spans 657–670 (PTGPVGAAGPSGPN). Positions 674 to 686 (GPAGGRGDGGPPG) are enriched in gly residues. Residues 687–697 (LTGFPGAAGRT) are compositionally biased toward low complexity. Residues 734 to 743 (GETGAGGPPG) are compositionally biased toward gly residues. 4 stretches are compositionally biased toward low complexity: residues 751-778 (SGEPGTAGPPGTAGPQGLLGAPGILGLP), 786-799 (LPGVAGAVGEPGPL), 846-868 (YAGNAGPVGAAGAPGPHGTVGPA), and 877-897 (PGPAGSVGPVGAVGPRGPSGP). Positions 901-912 (RGDKGEAGDKGP) are enriched in basic and acidic residues. Residues 987–997 (PAGPPGPPGPP) show a composition bias toward pro residues.

Belongs to the fibrillar collagen family. Trimers of one alpha 2(I) and two alpha 1(I) chains. Interacts (via C-terminus) with TMEM131 (via PapD-L domain); the interaction is direct and is involved in assembly and TRAPPIII ER-to-Golgi transport complex-dependent secretion of collagen. Prolines at the third position of the tripeptide repeating unit (G-X-Y) are hydroxylated in some or all of the chains. In terms of tissue distribution, expressed in bones.

The protein localises to the secreted. It is found in the extracellular space. Its subcellular location is the extracellular matrix. Functionally, type I collagen is a member of group I collagen (fibrillar forming collagen). The chain is Collagen alpha-2(I) chain from Doedicurus sp. (South American giant glyptodont).